The following is a 528-amino-acid chain: Homoserine O-acetyltransferase (528 aa).

An AB hydrolase-1 domain is found at 60 to 245 (LVICHALTGS…AALLTYRSRD (186 aa)). Catalysis depends on Ser154, which acts as the Nucleophile. 2 disordered regions span residues 250-335 (RFGR…VKTQ) and 388-413 (DLSAPSRDTSLSSLSSGLPSSPDATE). The span at 273–282 (QETTDPSVPS) shows a compositional bias: polar residues. The span at 295-304 (AWREHNDGHR) shows a compositional bias: basic and acidic residues. Residues 389–409 (LSAPSRDTSLSSLSSGLPSSP) are compositionally biased toward low complexity. Residues Asp438 and His467 contribute to the active site.

The protein belongs to the AB hydrolase superfamily. MetX family.

It is found in the cytoplasm. The enzyme catalyses L-homoserine + acetyl-CoA = O-acetyl-L-homoserine + CoA. It functions in the pathway amino-acid biosynthesis; L-methionine biosynthesis via de novo pathway; O-acetyl-L-homoserine from L-homoserine: step 1/1. With respect to regulation, inhibited by 6-carbamoyl-3a,4,5,9b-tetrahydro-3H-cyclopenta[ c]quinoline-4-carboxylic acid (CTCQC). Functionally, commits homoserine to the methionine biosynthesis pathway by catalyzing its O-acetylation. The protein is Homoserine O-acetyltransferase of Cryptococcus neoformans var. grubii serotype A (strain H99 / ATCC 208821 / CBS 10515 / FGSC 9487) (Filobasidiella neoformans var. grubii).